Reading from the N-terminus, the 354-residue chain is Allantoicase (354 aa).

It belongs to the allantoicase family.

It catalyses the reaction allantoate + H2O = (S)-ureidoglycolate + urea. The protein operates within nitrogen metabolism; (S)-allantoin degradation; (S)-ureidoglycolate from allantoate (aminidohydrolase route): step 1/1. Its function is as follows. Utilization of purines as secondary nitrogen sources, when primary sources are limiting. The sequence is that of Allantoicase (alc-1) from Neurospora crassa (strain ATCC 24698 / 74-OR23-1A / CBS 708.71 / DSM 1257 / FGSC 987).